The chain runs to 283 residues: Phosphate import ATP-binding protein PstB (283 aa).

Over residues 1–20 (MAQTLAQTKQISQSHTFDVS) the composition is skewed to polar residues. The disordered stretch occupies residues 1-32 (MAQTLAQTKQISQSHTFDVSQSHHKTPDDTNS). The ABC transporter domain occupies 37 to 278 (YSTQNLDLWY…PSNKKTEDYI (242 aa)). ATP is bound at residue 69-76 (GPSGCGKS).

This sequence belongs to the ABC transporter superfamily. Phosphate importer (TC 3.A.1.7) family. In terms of assembly, the complex is composed of two ATP-binding proteins (PstB), two transmembrane proteins (PstC and PstA) and a solute-binding protein (PstS).

The protein localises to the cell membrane. It carries out the reaction phosphate(out) + ATP + H2O = ADP + 2 phosphate(in) + H(+). Functionally, part of the ABC transporter complex PstSACB involved in phosphate import. Responsible for energy coupling to the transport system. In Staphylococcus aureus (strain USA300), this protein is Phosphate import ATP-binding protein PstB.